We begin with the raw amino-acid sequence, 850 residues long: Pierisin (850 aa).

3 Ricin B-type lectin domains span residues 267–409 (GEFM…WNII), 413–560 (FRPI…WDIK), and 564–707 (YQYV…WYLK).

It belongs to the pierisin ADP-ribosyltransferase family.

It carries out the reaction a 2'-deoxyguanosine in DNA + NAD(+) = an N(2)-(ADP-L-ribosyl)-2'-deoxyguanosine in DNA + nicotinamide + H(+). Its function is as follows. ADP-ribosylates double-stranded DNA by targeting the N2 amino group of dG residues. Induces apoptosis in a range of human cell lines. May play a role in destroying cells during pupation and/or defense against parasites. The sequence is that of Pierisin from Pieris brassicae (White butterfly).